A 129-amino-acid polypeptide reads, in one-letter code: MNNLLLHFFCVAVGGAIGASARFAMVLAMQSFGVRAFPFATLTVNIIGSFFLGLLLAYAEQQPVSETTRLFLGVGLLGAFTTFSTFSVEVVALASQGELLKAALHIAFNVIICIAAVFAAMMLYSTTVK.

The next 4 membrane-spanning stretches (helical) occupy residues 8-28 (FFCV…MVLA), 36-56 (AFPF…GLLL), 71-91 (FLGV…VEVV), and 103-123 (ALHI…AMML). The Na(+) site is built by glycine 78 and threonine 81.

It belongs to the fluoride channel Fluc/FEX (TC 1.A.43) family.

The protein localises to the cell inner membrane. The enzyme catalyses fluoride(in) = fluoride(out). Na(+) is not transported, but it plays an essential structural role and its presence is essential for fluoride channel function. Its function is as follows. Fluoride-specific ion channel. Important for reducing fluoride concentration in the cell, thus reducing its toxicity. The polypeptide is Fluoride-specific ion channel FluC (Idiomarina loihiensis (strain ATCC BAA-735 / DSM 15497 / L2-TR)).